A 261-amino-acid chain; its full sequence is Pantothenate synthetase (261 aa).

Residue 29 to 36 (MGALHNGH) coordinates ATP. His-36 acts as the Proton donor in catalysis. Gln-60 contributes to the (R)-pantoate binding site. Gln-60 contacts beta-alanine. 147–150 (GEKD) serves as a coordination point for ATP. Residue Gln-153 participates in (R)-pantoate binding. 184-187 (LSSR) provides a ligand contact to ATP.

This sequence belongs to the pantothenate synthetase family. In terms of assembly, homodimer.

Its subcellular location is the cytoplasm. It carries out the reaction (R)-pantoate + beta-alanine + ATP = (R)-pantothenate + AMP + diphosphate + H(+). It participates in cofactor biosynthesis; (R)-pantothenate biosynthesis; (R)-pantothenate from (R)-pantoate and beta-alanine: step 1/1. Catalyzes the condensation of pantoate with beta-alanine in an ATP-dependent reaction via a pantoyl-adenylate intermediate. This is Pantothenate synthetase from Francisella tularensis subsp. tularensis (strain FSC 198).